Reading from the N-terminus, the 285-residue chain is Ribose-phosphate pyrophosphokinase (285 aa).

ATP contacts are provided by residues 34–36 and 91–92; these read DGE and RQ. Mg(2+) contacts are provided by histidine 124 and aspartate 162. Residue lysine 185 is part of the active site. D-ribose 5-phosphate-binding positions include arginine 187, aspartate 211, and 215-219; that span reads STGGT.

This sequence belongs to the ribose-phosphate pyrophosphokinase family. Class III (archaeal) subfamily. Mg(2+) is required as a cofactor.

It is found in the cytoplasm. It carries out the reaction D-ribose 5-phosphate + ATP = 5-phospho-alpha-D-ribose 1-diphosphate + AMP + H(+). Its pathway is metabolic intermediate biosynthesis; 5-phospho-alpha-D-ribose 1-diphosphate biosynthesis; 5-phospho-alpha-D-ribose 1-diphosphate from D-ribose 5-phosphate (route I): step 1/1. Involved in the biosynthesis of the central metabolite phospho-alpha-D-ribosyl-1-pyrophosphate (PRPP) via the transfer of pyrophosphoryl group from ATP to 1-hydroxyl of ribose-5-phosphate (Rib-5-P). The chain is Ribose-phosphate pyrophosphokinase from Pyrococcus abyssi (strain GE5 / Orsay).